We begin with the raw amino-acid sequence, 421 residues long: F-box only protein 5 (421 aa).

S85 carries the phosphoserine modification. The tract at residues 114–219 is interaction with EVI5; that stretch reads ELEASRLYED…IGKKMGLEHL (106 aa). Positions 223–273 constitute an F-box domain; the sequence is AELSRRGFVHLLANILTKLSGMDLVNLSKVSRIWKKILENNKGAFQLYSKT. The tract at residues 236 to 313 is sufficient for interaction with RPS6KA2; Prevents association of CDC20 with RPS6KA2; that stretch reads NILTKLSGMD…KSSTWAPPKK (78 aa). Residues 236 to 383 are requires for efficient binding to CDC20; sequence NILTKLSGMD…SCQFEYCTKC (148 aa). Residues 280-421 form an inhibits APC ubiquitin ligase activity region; the sequence is SSKLSLHATT…KKSKKNLQRL (142 aa). Positions 296–299 are competitively blocks access of APC substrates to the D-box coreceptor formed by FZR1 and ANAPC10; it reads RAAL. The ZBR-type zinc-finger motif lies at 348-396; that stretch reads SLKACVRCNFPAKYDHYLERAVCKRESCQFEYCTKCLCAYHNNKDCLNG. Zn(2+)-binding residues include C352, C355, C370, C375, C380, C383, H388, and C393. The segment at 352–394 is allows a rapid multiple mono-ubiquitination of the APC substrate, but strongly inhibits the slow ubiquitin chain elongation catalyzed by UBCH10; that stretch reads CVRCNFPAKYDHYLERAVCKRESCQFEYCTKCLCAYHNNKDCL. Residues 411–421 form a sufficient to suppress UBE2S activity; essential for interaction with UBE2S; competitively inhibits the rapide ubiquitin chain elongation by UBE2D1 which blocks UBE2D1 with APC; indispensable for recruitment and position of FBXO5 to the catalytic site of APC; abrogates the inhibition of ubiquitin chain assembly primarily catalyzed by UBE2S; inhibits the ubiquitination by either UBE2C or UBE2D1 region; the sequence is TKKSKKNLQRL.

Part of a SCF (SKP1-cullin-F-box) protein ligase complex. Interacts with BTRC; mediates proteolysis by the SCF ubiquitin ligase complex leading to activation of APC in late mitosis and subsequent mitotic progression. Interacts with FZR1/CDH1 and the N-terminal substrate-binding domain of CDC20; prevents APC activation. Also interacts with EVI5 which blocks its phosphorylation by PLK1 and prevents its subsequent binding to BTRC and degradation. Interacts simultaneously with anaphase promoting complex (APC), through at least ANAPC2, CDC23, CDC27, the APC substrate GMNN and the APC activator FZR1. Interacts with UBE2S; interferes with the activity of UBE2S mainly by disrupting the dynamic electrostatic association between the C-terminal tail of UBE2S and ANAPC2. Interacts with RPS6KA2; cooperates to induce the metaphase arrest of early blastomeres; increases and stabilizes interaction of FBXO5 with CDC20. Phosphorylation by CDK2 and subsequently by PLK1 triggers degradation during early mitosis through ubiquitin-mediated proteolysis by the SCF ubiquitin ligase complex containing the F-box protein BTRC. This degradation is necessary for the activation of APC in late mitosis and subsequent mitotic progression. Phosphorylated by RPS6KA2; increases and stabilizes interaction with CDC20. In terms of processing, ubiquitinated by the SCF(BTRC) complex following phosphorylation by PLK1. Undergoes both 'Lys-11' and 'Lys-48'-linked polyubiquitination by APC-FZR1 complex leading to degradation during G1 phase by the proteasome. Degraded through the SCF(BTRC) complex; degradation occurs during oocyte maturation, between germinal vesicle breakdown (GVBD) and meiosis I, and is required for the meiosis I-meiosis II transition. In terms of tissue distribution, expressed in oocytes and granulosa cells. Expressed in proliferating cells compartments in hair follicle and skin epidermis, spermatogonia, and intestinal crypts.

It localises to the nucleus. The protein localises to the cytoplasm. It is found in the cytoskeleton. Its subcellular location is the spindle. It participates in protein modification; protein ubiquitination. In terms of biological role, regulator of APC activity during mitotic and meiotic cell cycle. During mitotic cell cycle plays a role as both substrate and inhibitor of APC-FZR1 complex. During G1 phase, plays a role as substrate of APC-FZR1 complex E3 ligase. Then switches as an inhibitor of APC-FZR1 complex during S and G2 leading to cell-cycle commitment. As APC inhibitor, prevents the degradation of APC substrates at multiple levels: by interacting with APC and blocking access of APC substrates to the D-box co-receptor, formed by FZR1 and ANAPC10; by suppressing ubiquitin ligation and chain elongation by APC by preventing the UBE2C and UBE2S activities. Plays a role in genome integrity preservation by coordinating DNA replication with mitosis through APC inhibition in interphase to stabilize CCNA2 and GMNN in order to promote mitosis and prevent rereplication and DNA damage-induced cellular senescence. During oocyte maturation, plays a role in meiosis through inactivation of APC-FZR1 complex. Inhibits APC through RPS6KA2 interaction that increases FBXO5 affiniy for CDC20 leading to the metaphase arrest of the second meiotic division before fertilization. Controls entry into the first meiotic division through inactivation of APC-FZR1 complex. Promotes migration and osteogenic differentiation of mesenchymal stem cells. The chain is F-box only protein 5 from Mus musculus (Mouse).